Here is a 282-residue protein sequence, read N- to C-terminus: 3-methyl-2-oxobutanoate hydroxymethyltransferase (282 aa).

Residues Asp63 and Asp102 each coordinate Mg(2+). Residues 63–64, Asp102, and Lys132 contribute to the 3-methyl-2-oxobutanoate site; that span reads DS. Residue Glu134 coordinates Mg(2+). The active-site Proton acceptor is Glu200.

This sequence belongs to the PanB family. As to quaternary structure, homodecamer; pentamer of dimers. The cofactor is Mg(2+).

Its subcellular location is the cytoplasm. The catalysed reaction is 3-methyl-2-oxobutanoate + (6R)-5,10-methylene-5,6,7,8-tetrahydrofolate + H2O = 2-dehydropantoate + (6S)-5,6,7,8-tetrahydrofolate. It participates in cofactor biosynthesis; (R)-pantothenate biosynthesis; (R)-pantoate from 3-methyl-2-oxobutanoate: step 1/2. In terms of biological role, catalyzes the reversible reaction in which hydroxymethyl group from 5,10-methylenetetrahydrofolate is transferred onto alpha-ketoisovalerate to form ketopantoate. This Mycobacterium sp. (strain JLS) protein is 3-methyl-2-oxobutanoate hydroxymethyltransferase.